A 1958-amino-acid polypeptide reads, in one-letter code: Probable Rho GTPase-activating protein CG5521 (1958 aa).

3 disordered regions span residues 1–21, 400–424, and 635–804; these read MFTK…QDSK, PPFL…RSQR, and GSVW…GIEG. Pro residues predominate over residues 400–414; that stretch reads PPFLLEPNDDPPPPS. Residues 640–656 show a composition bias toward low complexity; that stretch reads GSGSNSAANGGSAASAA. Phosphoserine occurs at positions 718, 764, and 767. The span at 758-774 shows a compositional bias: basic and acidic residues; the sequence is DLRRAMSLDSLARKGDA. Positions 775 to 785 are enriched in acidic residues; it reads EETDSYQEGDN. Phosphoserine is present on residues serine 787, serine 791, serine 793, and serine 795. Polar residues predominate over residues 788–800; it reads GAGSRSPSPTASS. Residue tyrosine 980 is modified to Phosphotyrosine. The interval 1534–1568 is disordered; the sequence is HSTQAPSPALRHASSNSSLQQPDQRSLHSTTASFD. Positions 1546–1568 are enriched in polar residues; it reads ASSNSSLQQPDQRSLHSTTASFD. A Phosphoserine modification is found at serine 1551. The Rap-GAP domain occupies 1612-1819; that stretch reads LRNVDLQKCR…EERNRSLDSV (208 aa). The interval 1903-1958 is disordered; sequence ATGMSSASPRGPRKLGAPFKSVTKKHSLQHIAVGGGAGAGGDTPPESPTLPQRRFK. Threonine 1945 carries the phosphothreonine modification. The residue at position 1949 (serine 1949) is a Phosphoserine.

This Drosophila melanogaster (Fruit fly) protein is Probable Rho GTPase-activating protein CG5521.